The following is a 145-amino-acid chain: Acidic phospholipase A2 S1-11 (145 aa).

The signal sequence occupies residues 1–19 (MYPAHLLVLLAVCVSLLGA). A propeptide spanning residues 20–27 (SDMPPQPL) is cleaved from the precursor. 5 disulfides stabilise this stretch: C38–C99, C54–C144, C56–C72, C71–C127, and C106–C118. 3 residues coordinate Ca(2+): Y55, G57, and G59. The active site involves H75. D76 is a binding site for Ca(2+). The active site involves D121.

Belongs to the phospholipase A2 family. Group I subfamily. D49 sub-subfamily. Requires Ca(2+) as cofactor. This enzyme lacks two of the seven disulfide bonds found in similar PLA2 proteins. As to expression, expressed by the venom gland.

It localises to the secreted. The enzyme catalyses a 1,2-diacyl-sn-glycero-3-phosphocholine + H2O = a 1-acyl-sn-glycero-3-phosphocholine + a fatty acid + H(+). Snake venom phospholipase A2 (PLA2) that inhibits collagen-induced platelet aggregation. PLA2 catalyzes the calcium-dependent hydrolysis of the 2-acyl groups in 3-sn-phosphoglycerides. In Austrelaps superbus (Lowland copperhead snake), this protein is Acidic phospholipase A2 S1-11.